Consider the following 1574-residue polypeptide: Disco-interacting protein 2 homolog B (1574 aa).

3 positions are modified to phosphoserine: serine 9, serine 50, and serine 53. A DMAP1-binding domain is found at 12–130 (AVAALPPEVR…PMPTKRRSTF (119 aa)). The segment at 31–166 (LSEGDITQKG…AALSAALQQS (136 aa)) is disordered. The segment covering 52–62 (YSPQTQETDSI) has biased composition (polar residues). Low complexity predominate over residues 69–82 (QTPAPTAAQTSAPS). Threonine 70 is modified (phosphothreonine). Residues 91 to 103 (GARDERYRSDIHT) are compositionally biased toward basic and acidic residues. Serine 99 carries the post-translational modification Phosphoserine. Threonine 139 carries the phosphothreonine modification. Phosphoserine is present on residues serine 145, serine 147, and serine 152. The span at 154-166 (RRQAALSAALQQS) shows a compositional bias: low complexity. Phosphoserine occurs at positions 177, 192, and 202. Positions 178–200 (IQGSSTSSSASSTLSHGEVKGTS) are disordered. Over residues 181–192 (SSTSSSASSTLS) the composition is skewed to low complexity. The interval 217-244 (APPDVTATTSSSSSSLRPANIDLPPSGI) is disordered. Position 256 is a phosphoserine (serine 256).

This sequence belongs to the DIP2 family. As to quaternary structure, interacts with alpha-tubulin. In terms of tissue distribution, highly expressed in brain and spinal cord (at protein level). In brain, expression is detected in the main olfactory bulb, cortex, lateral ventricle, cornu ammonis 1, cornu ammonis 3, dentate gyrus, striatum, cerebellar cortex and medial habenula. Expressed primarily in neurons including excitatory pyramidal neurons and inhibitory interneurons.

It is found in the cell projection. The protein localises to the dendrite. Its subcellular location is the axon. It localises to the perikaryon. Functionally, negatively regulates axonal outgrowth and is essential for normal synaptic transmission. Not required for regulation of axon polarity. Promotes acetylation of alpha-tubulin. The protein is Disco-interacting protein 2 homolog B (Dip2b) of Mus musculus (Mouse).